The primary structure comprises 38 residues: Cytochrome b6-f complex subunit 5 (38 aa).

A helical transmembrane segment spans residues 5–25 (LLLGIVLGLIPVTLAGLFVAA).

Belongs to the PetG family. As to quaternary structure, the 4 large subunits of the cytochrome b6-f complex are cytochrome b6, subunit IV (17 kDa polypeptide, PetD), cytochrome f and the Rieske protein, while the 4 small subunits are PetG, PetL, PetM and PetN. The complex functions as a dimer.

Its subcellular location is the cellular thylakoid membrane. In terms of biological role, component of the cytochrome b6-f complex, which mediates electron transfer between photosystem II (PSII) and photosystem I (PSI), cyclic electron flow around PSI, and state transitions. PetG is required for either the stability or assembly of the cytochrome b6-f complex. This chain is Cytochrome b6-f complex subunit 5, found in Synechocystis sp. (strain ATCC 27184 / PCC 6803 / Kazusa).